Here is a 743-residue protein sequence, read N- to C-terminus: MSKTSCFLKKYRLILLWCILGIAYILFWTHRISKAFASVSSTSDSTVHLFERGNTLNDSNDQILLTCNDIKNITPANQCRFAKAYCKGEASGFFDYVEFYFCTINSLRFPVLSIIVGWLIFLFITIGISASDFFSTNLVTISWLLQLPDSVVGVTFLALGNGSPDILSTFAAVRVNSGGMAIGELLGSAFFIVAIVAGSVCLIKPFKIPRRHFLRDVAFLTGTILLVIMFVLHDGSLSIWQSLVMILYYLLYVLFVFFSGSSGVSVVITDENYLPVSLPVYSPVLNSFDDSDSYSSTDSELSEEAFLLPAQASRKTQKIHYINDNDPSNSYSSYQHSHVHDFIHKNNTHSNRVLSQSSGPIVRPSLLAALDFRSSNEEQHPGLRSLDPLNIQDGDLTMHPMHIRHSQSDFYPSGINTPVSGINYPNLGFSANNSVQSLVSEIFRHPTHTDEDFPLPSPSLSSLLFPTLRNFAKKSWYEKLMDVLAVPSVLIFTLALPVYQCPRLAVDPIYHMDVSNCNPSKPTWSRKLRLLQCVFVPFAFVTFSITGGNRLYIYAASSVFSILCITALYYYTDEEKPPKFLPWVSFIGFVLGIIWISTIANEVVGILRALGVIFNLNESILGLTVFAAGNSLSDLIADIMIARSGFPEMAMGGVFGGPTLNILIGIGISSFYSSISNHGNDSVIEIPHSLSITAYFLLACLLLLLIYVPLNRFRVNRVLGLLLFILYIVGTSTNIVVELLKDK.

The next 13 membrane-spanning stretches (helical) occupy residues 13-33 (LILL…HRIS), 109-129 (FPVL…IGIS), 138-158 (LVTI…TFLA), 182-202 (IGEL…SVCL), 213-233 (FLRD…FVLH), 239-258 (IWQS…FVFF), 528-548 (LRLL…ITGG), 551-571 (LYIY…LYYY), 580-600 (FLPW…STIA), 609-629 (ALGV…FAAG), 649-669 (MAMG…IGIS), 690-710 (LSIT…YVPL), and 718-738 (VLGL…IVVE).

It belongs to the Ca(2+):cation antiporter (CaCA) (TC 2.A.19) family.

Its subcellular location is the endoplasmic reticulum membrane. Its function is as follows. Putative cation exchanger. The sequence is that of Putative cation exchanger C3A12.06c from Schizosaccharomyces pombe (strain 972 / ATCC 24843) (Fission yeast).